Consider the following 355-residue polypeptide: Blue-sensitive opsin (355 aa).

Over Met1 to Ile41 the chain is Extracellular. Asn22 is a glycosylation site (N-linked (GlcNAc...) asparagine). The chain crosses the membrane as a helical span at residues Phe42–Cys66. The Cytoplasmic segment spans residues Thr67–Asn78. The chain crosses the membrane as a helical span at residues Tyr79–Leu104. Topologically, residues Asn105–Glu118 are extracellular. The cysteines at positions 115 and 192 are disulfide-linked. Residues Gly119–Phe138 form a helical membrane-spanning segment. Over Glu139–His157 the chain is Cytoplasmic. A helical transmembrane segment spans residues Ala158–Ser181. Residues Arg182–Ser207 lie on the Extracellular side of the membrane. Residue Asn205 is glycosylated (N-linked (GlcNAc...) asparagine). The helical transmembrane segment at Tyr208–Leu235 threads the bilayer. Over Lys236–Lys257 the chain is Cytoplasmic. A helical transmembrane segment spans residues Met258–Val281. The Extracellular segment spans residues Phe282–Asp289. A helical transmembrane segment spans residues Leu290–Met314. Lys301 is modified (N6-(retinylidene)lysine). Residues Asn315–Lys355 lie on the Cytoplasmic side of the membrane. Positions Gly334–Lys355 are disordered. Residues Ser340–Lys355 are compositionally biased toward low complexity.

The protein belongs to the G-protein coupled receptor 1 family. Opsin subfamily. Post-translationally, phosphorylated on some or all of the serine and threonine residues present in the C-terminal region. As to expression, the color pigments are found in the cone photoreceptor cells.

It is found in the membrane. Functionally, visual pigments are the light-absorbing molecules that mediate vision. They consist of an apoprotein, opsin, covalently linked to cis-retinal. This Psalidodon fasciatus (Banded astyanax) protein is Blue-sensitive opsin (B23).